Here is a 752-residue protein sequence, read N- to C-terminus: MAEPQAESEPLLGGARGGGGDWPAGLTTYRSIQVGPGAAARWDLCIDQAVVFIEDAIQYRSINHRVDASSMWLYRRYYSNVCQRTLSFTIFLILFLAFIETPSSLTSTADVRYRAAPWEPPCGLTESVEVLCLLVFAADLSVKGYLFGWAHFQKNLWLLGYLVVLVVSLVDWTVSLSLVCHEPLRIRRLLRPFFLLQNSSMMKKTLKCIRWSLPEMASVGLLLAIHLCLFTMFGMLLFAGGKQDDGQDRERLTYFQNLPESLTSLLVLLTTANNPDVMIPAYSKNRAYAIFFIVFTVIGSLFLMNLLTAIIYSQFRGYLMKSLQTSLFRRRLGTRAAFEVLSSMVGEGGAFPQAVGVKPQNLLQVLQKVQLDSSHKQAMMEKVRSYGSVLLSAEEFQKLFNELDRSVVKEHPPRPEYQSPFLQSAQFLFGHYYFDYLGNLIALANLVSICVFLVLDADVLPAERDDFILGILNCVFIVYYLLEMLLKVFALGLRGYLSYPSNVFDGLLTVVLLVLEISTLAVYRLPHPGWRPEMVGLLSLWDMTRMLNMLIVFRFLRIIPSMKLMAVVASTVLGLVQNMRAFGGILVVVYYVFAIIGINLFRGVIVALPGNSSLAPANGSAPCGSFEQLEYWANNFDDFAAALVTLWNLMVVNNWQVFLDAYRRYSGPWSKIYFVLWWLVSSVIWVNLFLALILENFLHKWDPRSHLQPLAGTPEATYQMTVELLFRDILEEPGEDELTERLSQHPHLWLCR.

The Cytoplasmic segment spans residues methionine 1–arginine 84. Residues threonine 85–leucine 105 traverse the membrane as a helical segment. Residues threonine 106–serine 127 lie on the Extracellular side of the membrane. The helical transmembrane segment at valine 128–glycine 148 threads the bilayer. The Cytoplasmic segment spans residues tryptophan 149–asparagine 155. The chain crosses the membrane as a helical span at residues leucine 156 to leucine 176. At serine 177 to proline 183 the chain is on the extracellular side. Residues leucine 184 to lysine 204 form a helical membrane-spanning segment. The segment at lysine 203 to lysine 207 is interaction with phosphatidylinositol 3,5-bisphosphate. The Cytoplasmic portion of the chain corresponds to threonine 205–serine 218. Residues valine 219–alanine 239 traverse the membrane as a helical segment. The Extracellular portion of the chain corresponds to glycine 240–tyrosine 254. Positions phenylalanine 255 to isoleucine 279 form an intramembrane region, helical; Pore-forming. Topologically, residues proline 280–alanine 289 are extracellular. A helical membrane pass occupies residues isoleucine 290–isoleucine 310. The Cytoplasmic segment spans residues isoleucine 311–tyrosine 436. The chain crosses the membrane as a helical span at residues leucine 437–valine 459. The Extracellular segment spans residues leucine 460–aspartate 465. A helical membrane pass occupies residues aspartate 466–leucine 486. The Cytoplasmic portion of the chain corresponds to lysine 487–asparagine 502. A helical membrane pass occupies residues valine 503 to tyrosine 523. The Extracellular segment spans residues arginine 524–arginine 554. Residues phenylalanine 555–leucine 575 traverse the membrane as a helical segment. Residues valine 576–arginine 580 are Cytoplasmic-facing. Residues alanine 581–phenylalanine 601 traverse the membrane as a helical segment. Residues arginine 602–asparagine 635 lie on the Extracellular side of the membrane. Asparagine 611 and asparagine 618 each carry an N-linked (GlcNAc...) asparagine glycan. Positions phenylalanine 636 to phenylalanine 658 form an intramembrane region, helical; Pore-forming. At leucine 659–tyrosine 673 the chain is on the extracellular side. The helical transmembrane segment at phenylalanine 674–leucine 694 threads the bilayer. The Cytoplasmic segment spans residues glutamate 695–arginine 752.

The protein belongs to the calcium channel alpha-1 subunit (TC 1.A.1.11) family. Two pore calcium channel subfamily. In terms of assembly, homodimer. Interacts with LRRK2. Interacts with HAX1. Interacts with MTOR; the interaction is required for TPCN2 ATP sensitivity. Found in a complex with LSM12, TPCN1 and TPCN2. Interacts with LSM12. In terms of processing, N-glycosylated. In terms of tissue distribution, widely expressed. Expressed at high level in liver and kidney.

It is found in the late endosome membrane. Its subcellular location is the lysosome membrane. The protein resides in the melanosome membrane. It catalyses the reaction Na(+)(in) = Na(+)(out). It carries out the reaction Ca(2+)(in) = Ca(2+)(out). With respect to regulation, regulated by Mg(2+) ions, cytosolic Mg(2+) selectively inhibits outward current while lysosomal Mg(2+) modestly inhibits both the outward and inward currents. In the absence of Mg(2+), NAADP readily activates TPCN2, with properties similar to PI(3,5)P2. Na(+) current is inhibited by ATP in a MTORC-dependent manner. ATP sensitivity is independent of PI(3,5)P2. Both current elicited by PI(3,5)P2 as well as NAADP are inhibited by tetrandrine. Intracellular channel initially characterized as a non-selective Ca(2+)-permeable channel activated by NAADP (nicotinic acid adenine dinucleotide phosphate), it is also a highly-selective Na(+) channel activated directly by PI(3,5)P2 (phosphatidylinositol 3,5-bisphosphate). Localizes to the lysosomal and late endosome membranes where it regulates organellar membrane excitability, membrane trafficking, and pH homeostasis. Is associated with a plethora of physiological processes, including mTOR-dependent nutrient sensing, skin pigmentation and autophagy. Ion selectivity is not fixed but rather agonist-dependent and under defined ionic conditions, can be readily activated by both NAADP and PI(3,5)P2. As calcium channel, it increases the pH in the lysosomal lumen, as sodium channel, it promotes lysosomal exocytosis. Plays a crucial role in endolysosomal trafficking in the endolysosomal degradation pathway and is potentially involved in the homeostatic control of many macromolecules and cell metabolites. Also expressed in melanosomes of pigmented cells where mediates a Ca(2+) channel and/or PI(3,5)P2-activated melanosomal Na(+) channel to acidify pH and inhibit tyrosinase activity required for melanogenesis and pigmentation. Unlike the voltage-dependent TPCN1, TPCN2 is voltage independent and can be activated solely by PI(3,5)P2 binding. In contrast, PI(4,5)P2, PI(3,4)P2, PI(3)P and PI(5)P have no obvious effect on channel activation. Functionally, (Microbial infection) During Ebola virus (EBOV) infection, controls the movement of endosomes containing virus particles and is required by EBOV to escape from the endosomal network into the cell cytoplasm. In terms of biological role, (Microbial infection) Required for cell entry of coronaviruses SARS-CoV and SARS-CoV-2, as well as human coronavirus EMC (HCoV-EMC), by endocytosis. The sequence is that of Two pore channel protein 2 from Homo sapiens (Human).